The following is a 479-amino-acid chain: (R)-1-hydroxy-2-aminoethylphosphonate ammonia-lyase (479 aa).

At K317 the chain carries N6-(pyridoxal phosphate)lysine.

This sequence belongs to the class-III pyridoxal-phosphate-dependent aminotransferase family. Pyridoxal 5'-phosphate serves as cofactor.

It catalyses the reaction (1R)-(2-amino-1-hydroxyethyl)phosphonate = phosphonoacetaldehyde + NH4(+). Functionally, involved in phosphonate degradation. Functions as a lyase that catalyzes an elimination reaction on the naturally occurring compound (R)-1-hydroxy-2-aminoethylphosphonate ((R)-HAEP), releasing ammonia and generating phosphonoacetaldehyde (PAA), which can be then hydrolyzed by PhnX, encoded by an adjacent gene. Thus, catalyzes a reaction that serves to funnel (R)-HAEP into the hydrolytic pathway for aminoethylphosphonate (AEP, the most common biogenic phosphonate) degradation, expanding the scope and the usefulness of the pathway itself. Is not active toward the (S) enantiomer of HAEP or other HAEP-related compounds such as ethanolamine and D,L-isoserine, indicating a very high substrate specificity. The protein is (R)-1-hydroxy-2-aminoethylphosphonate ammonia-lyase of Vibrio splendidus (strain 12B01).